The sequence spans 269 residues: 2-dehydro-3-deoxyphosphooctonate aldolase (269 aa).

It belongs to the KdsA family.

It is found in the cytoplasm. It carries out the reaction D-arabinose 5-phosphate + phosphoenolpyruvate + H2O = 3-deoxy-alpha-D-manno-2-octulosonate-8-phosphate + phosphate. The protein operates within carbohydrate biosynthesis; 3-deoxy-D-manno-octulosonate biosynthesis; 3-deoxy-D-manno-octulosonate from D-ribulose 5-phosphate: step 2/3. It functions in the pathway bacterial outer membrane biogenesis; lipopolysaccharide biosynthesis. This Chlamydia trachomatis serovar L2 (strain ATCC VR-902B / DSM 19102 / 434/Bu) protein is 2-dehydro-3-deoxyphosphooctonate aldolase.